The following is a 145-amino-acid chain: D-aminoacyl-tRNA deacylase (145 aa).

Positions 137 to 138 match the Gly-cisPro motif, important for rejection of L-amino acids motif; that stretch reads GP.

Belongs to the DTD family. In terms of assembly, homodimer.

It localises to the cytoplasm. The catalysed reaction is glycyl-tRNA(Ala) + H2O = tRNA(Ala) + glycine + H(+). The enzyme catalyses a D-aminoacyl-tRNA + H2O = a tRNA + a D-alpha-amino acid + H(+). An aminoacyl-tRNA editing enzyme that deacylates mischarged D-aminoacyl-tRNAs. Also deacylates mischarged glycyl-tRNA(Ala), protecting cells against glycine mischarging by AlaRS. Acts via tRNA-based rather than protein-based catalysis; rejects L-amino acids rather than detecting D-amino acids in the active site. By recycling D-aminoacyl-tRNA to D-amino acids and free tRNA molecules, this enzyme counteracts the toxicity associated with the formation of D-aminoacyl-tRNA entities in vivo and helps enforce protein L-homochirality. This chain is D-aminoacyl-tRNA deacylase, found in Cronobacter sakazakii (strain ATCC BAA-894) (Enterobacter sakazakii).